A 120-amino-acid polypeptide reads, in one-letter code: Chaperonin GroEL (120 aa).

ATP is bound at residue 23–27; it reads DGTTT.

The protein belongs to the chaperonin (HSP60) family. Forms a cylinder of 14 subunits composed of two heptameric rings stacked back-to-back. Interacts with the co-chaperonin GroES.

The protein resides in the cytoplasm. The enzyme catalyses ATP + H2O + a folded polypeptide = ADP + phosphate + an unfolded polypeptide.. Functionally, together with its co-chaperonin GroES, plays an essential role in assisting protein folding. The GroEL-GroES system forms a nano-cage that allows encapsulation of the non-native substrate proteins and provides a physical environment optimized to promote and accelerate protein folding. In Mycobacterium malmoense, this protein is Chaperonin GroEL.